A 293-amino-acid chain; its full sequence is Exosome complex component RRP4 (293 aa).

Residues M1 to R20 are disordered. An S1 motif domain is found at E79 to R159. Phosphoserine is present on S124.

Belongs to the RRP4 family. Component of the RNA exosome core complex (Exo-9), composed of EXOSC1, EXOSC2, EXOSC3, EXOSC4, EXOSC5, EXOSC6, EXOSC7, EXOSC8 and EXOSC9; within the complex interacts with EXOSC4 and EXOSC7. The catalytically inactive RNA exosome core complex (Exo-9) associates with the catalytic subunit EXOSC10/RRP6. Exo-9 may associate with DIS3 to form the nucleolar exosome complex, or DIS3L to form the cytoplasmic exosome complex. Exo-9 is formed by a hexameric base ring consisting of the heterodimers EXOSC4-EXOSC9, EXOSC5-EXOSC8 and EXOSC6-EXOSC7, and a cap ring consisting of EXOSC1, EXOSC2 and EXOSC3. The RNA exosome complex associates with cofactors C1D/RRP47, MPHOSPH6/MPP6 and MTREX/MTR4. Interacts with GTPBP1. Interacts with ZFP36L1 (via N-terminus).

It localises to the cytoplasm. The protein resides in the nucleus. It is found in the nucleolus. Its function is as follows. Non-catalytic component of the RNA exosome complex which has 3'-&gt;5' exoribonuclease activity and participates in a multitude of cellular RNA processing and degradation events. In the nucleus, the RNA exosome complex is involved in proper maturation of stable RNA species such as rRNA, snRNA and snoRNA, in the elimination of RNA processing by-products and non-coding 'pervasive' transcripts, such as antisense RNA species and promoter-upstream transcripts (PROMPTs), and of mRNAs with processing defects, thereby limiting or excluding their export to the cytoplasm. The RNA exosome may be involved in Ig class switch recombination (CSR) and/or Ig variable region somatic hypermutation (SHM) by targeting AICDA deamination activity to transcribed dsDNA substrates. In the cytoplasm, the RNA exosome complex is involved in general mRNA turnover and specifically degrades inherently unstable mRNAs containing AU-rich elements (AREs) within their 3' untranslated regions, and in RNA surveillance pathways, preventing translation of aberrant mRNAs. It seems to be involved in degradation of histone mRNA. The catalytic inactive RNA exosome core complex of 9 subunits (Exo-9) is proposed to play a pivotal role in the binding and presentation of RNA for ribonucleolysis, and to serve as a scaffold for the association with catalytic subunits and accessory proteins or complexes. EXOSC2 as peripheral part of the Exo-9 complex stabilizes the hexameric ring of RNase PH-domain subunits through contacts with EXOSC4 and EXOSC7. This Mus musculus (Mouse) protein is Exosome complex component RRP4 (Exosc2).